We begin with the raw amino-acid sequence, 25 residues long: Chrysophsin-2 (25 aa).

Residue histidine 25 is modified to Histidine amide.

As to expression, gill.

The protein localises to the secreted. In terms of biological role, has antibacterial activity against Gram-positive bacteria B.subtilis ATCC 6633, L.garvieae ATCC 49156 and S.iniae F-8502, and Gram-negative bacteria E.coli WT-2, V.anguillarum ATCC 19264, V.penaeicida KHA, V.harveyi ATCC 14126, V.vulnificus ATCC 33148 and A.salmonicida NCMB 1102. Has hemolytic activity against human red blood cells. Seems to disrupt the membranes by adopting an alpha helical conformation. May play a significant role in innate host defense. The polypeptide is Chrysophsin-2 (Pagrus major (Red sea bream)).